A 163-amino-acid chain; its full sequence is Protein-export protein SecB (163 aa).

Belongs to the SecB family. In terms of assembly, homotetramer, a dimer of dimers. One homotetramer interacts with 1 SecA dimer.

The protein resides in the cytoplasm. Its function is as follows. One of the proteins required for the normal export of preproteins out of the cell cytoplasm. It is a molecular chaperone that binds to a subset of precursor proteins, maintaining them in a translocation-competent state. It also specifically binds to its receptor SecA. This Methylibium petroleiphilum (strain ATCC BAA-1232 / LMG 22953 / PM1) protein is Protein-export protein SecB.